Here is a 167-residue protein sequence, read N- to C-terminus: Protein-export protein SecB (167 aa).

The protein belongs to the SecB family. Homotetramer, a dimer of dimers. One homotetramer interacts with 1 SecA dimer.

The protein resides in the cytoplasm. In terms of biological role, one of the proteins required for the normal export of preproteins out of the cell cytoplasm. It is a molecular chaperone that binds to a subset of precursor proteins, maintaining them in a translocation-competent state. It also specifically binds to its receptor SecA. This is Protein-export protein SecB from Idiomarina loihiensis (strain ATCC BAA-735 / DSM 15497 / L2-TR).